A 313-amino-acid polypeptide reads, in one-letter code: 3'-5' exoribonuclease YhaM (313 aa).

The segment at residues 22–90 is a DNA-binding region (OB); it reads SSVKGTASNG…QLKIRQIRQA (69 aa). One can recognise an HD domain in the interval 163–279; the sequence is HVVSMLRLAK…LHQIDLMDAS (117 aa).

It belongs to the YhaM family.

Its function is as follows. Shows a 3'-5' exoribonuclease activity. The sequence is that of 3'-5' exoribonuclease YhaM from Listeria monocytogenes serovar 1/2a (strain ATCC BAA-679 / EGD-e).